The chain runs to 181 residues: Adenine phosphoribosyltransferase (181 aa).

It belongs to the purine/pyrimidine phosphoribosyltransferase family. Homodimer.

Its subcellular location is the cytoplasm. It carries out the reaction AMP + diphosphate = 5-phospho-alpha-D-ribose 1-diphosphate + adenine. It functions in the pathway purine metabolism; AMP biosynthesis via salvage pathway; AMP from adenine: step 1/1. In terms of biological role, catalyzes a salvage reaction resulting in the formation of AMP, that is energically less costly than de novo synthesis. The chain is Adenine phosphoribosyltransferase (Aprt) from Drosophila pseudoobscura pseudoobscura (Fruit fly).